The sequence spans 690 residues: MARKYPLDKYRNIGIMAHIDAGKTTTTERILFYTGKSYKIGEVHEGTATMDWMEQEQERGITITSAATTCFWNDHRINIIDTPGHVDFTIEVERSLRVLDGAVACFDGVAGVEPQSETVWRQAEKYHVPRMCFVNKLDRTGANFMRCVDMIRDRLGARPLVLYLPIGIESDFKGLVDLVENRAIIWLEESLGAKFEYQEIPEEYKAEAEAARAEMIEMAVEQDDAAMEAYLEGNEPDADTLKKLIRKGTLAQDFVPVLCGSAFKNKGVQPLLDAVVDFLPSPLDIPPVEGVKMDGETKDSRKPSDDEPFSALAFKIMNDPFVGSLTFARIYSGKLTKGTVLNSVKDKREKVGRMLLMHANSREDLEEAYAGDIVALVGMKETTTGDTLCAPNAPIILERMEFPEPVIEVAVEPKTKADQEKMGLALNRLAAEDPSFRVASDFESGQTIIKGMGELHLDILVDRMKREFKVEANVGAPQVAYRESLARPVEVDYTHKKQSGGSGQFGRVKVNLVPSERGAGIQFFDEIKGGNIPREYIPSVEKGMRETAETGSLIGFPIIDFEIHLTDGAYHDVDSSALAFEIAGRGAMREAAQKAGIKLLEPVMRVEVITPEDYLGDVIGDMNSRRGQIQGTDTRGNAQVVEAMVPLANMFGYVNQLRSFTQGRAQYSMQFSHYDEVPANVADELKSKMA.

Residues 8-283 (DKYRNIGIMA…AVVDFLPSPL (276 aa)) form the tr-type G domain. Residues 17 to 24 (AHIDAGKT), 81 to 85 (DTPGH), and 135 to 138 (NKLD) contribute to the GTP site.

The protein belongs to the TRAFAC class translation factor GTPase superfamily. Classic translation factor GTPase family. EF-G/EF-2 subfamily.

Its subcellular location is the cytoplasm. Catalyzes the GTP-dependent ribosomal translocation step during translation elongation. During this step, the ribosome changes from the pre-translocational (PRE) to the post-translocational (POST) state as the newly formed A-site-bound peptidyl-tRNA and P-site-bound deacylated tRNA move to the P and E sites, respectively. Catalyzes the coordinated movement of the two tRNA molecules, the mRNA and conformational changes in the ribosome. This chain is Elongation factor G, found in Zymomonas mobilis subsp. mobilis (strain ATCC 31821 / ZM4 / CP4).